Here is a 161-residue protein sequence, read N- to C-terminus: Nucleotide-binding protein Sden_0770 (161 aa).

Belongs to the YajQ family.

Nucleotide-binding protein. This chain is Nucleotide-binding protein Sden_0770, found in Shewanella denitrificans (strain OS217 / ATCC BAA-1090 / DSM 15013).